The following is a 193-amino-acid chain: dCTP deaminase (193 aa).

DCTP contacts are provided by residues 110-115 (RSSLAR), aspartate 128, 136-138 (VLE), tyrosine 171, lysine 178, and glutamine 182. The active-site Proton donor/acceptor is glutamate 138. Residues 169–193 (RPYNRREDAKYRNQQGAVASRIDKD) are disordered.

This sequence belongs to the dCTP deaminase family. As to quaternary structure, homotrimer.

The enzyme catalyses dCTP + H2O + H(+) = dUTP + NH4(+). It functions in the pathway pyrimidine metabolism; dUMP biosynthesis; dUMP from dCTP (dUTP route): step 1/2. Functionally, catalyzes the deamination of dCTP to dUTP. The polypeptide is dCTP deaminase (Sodalis glossinidius (strain morsitans)).